A 1096-amino-acid chain; its full sequence is Inactive phospholipase C-like protein 1 (1096 aa).

The segment at 1–101 (MAEGAASREA…KKTVSFSSMP (101 aa)) is disordered. A compositionally biased stretch (low complexity) spans 26–41 (GADAASGDAAPEASGG). Phosphoserine occurs at positions 48 and 78. Positions 83 to 222 (PSNQKCGGRK…NIWVSGLRYL (140 aa)) are interaction with PPP1C. At threonine 94 the chain carries Phosphothreonine. Serine 96 is subject to Phosphoserine. One can recognise a PH domain in the interval 114-224 (SFMQAGCELK…WVSGLRYLVS (111 aa)). The PI-PLC X-box domain occupies 399–543 (QDMTQPLSHY…LKHMIIVKGK (145 aa)). Positions 544-568 (KLPSESDLLEGEVTDEDEEAEMSRR) are interaction with GABA A beta subunit. Position 557 is a phosphothreonine (threonine 557). Serine 570 bears the Phosphoserine mark. Positions 586-702 (LSDLVSICKS…GYVLRPSIMR (117 aa)) constitute a PI-PLC Y-box domain. Positions 702 to 831 (RDEVSYFSAN…PGYRHVPLRS (130 aa)) constitute a C2 domain. Residues 1040-1060 (DLLKNAKNEAVENIKQIQLAC) are a coiled coil. Residues 1067–1096 (KGPGSAAEAKGKRSLEAIEEKESSEENGKL) are disordered. Positions 1075-1096 (AKGKRSLEAIEEKESSEENGKL) are enriched in basic and acidic residues. Residue serine 1080 is modified to Phosphoserine.

It belongs to the PRIP family. In terms of assembly, interacts with PPP2CA, GABA receptor beta subunits, GABA receptor gamma-2 subunits. Interacts with Ins(1,4,5)P3, Ins(1,4,5,6)P4, GABARAP, and PPP1C. May form a ternary complex with GABA receptor beta subunit and GABARAP. The formation of a ternary complex with GABA receptor beta subunit and GABARAP could be the key step for facilitating the association of GABARAP with the GABA receptor gamma-2 subunit and to allow it to be transported at the right destination. In terms of processing, phosphorylation of Thr-94 resulted in dissociation of PPP1C from PRIP1. In vitro, phosphorylated by the catalytic subunit of PKA. Expressed in brain. Found in the granular cell and Purkinje cell layers in the cerebellum; and in the hippocampal pyramidal cells, dentate granule cells and pyramidal granule cells of the cerebral cortex in the cerebrum.

The protein localises to the cytoplasm. Functionally, involved in an inositol phospholipid-based intracellular signaling cascade. Shows no PLC activity to phosphatidylinositol 4,5-bisphosphate and phosphatidylinositol. Component in the phospho-dependent endocytosis process of GABA A receptor. Acts as an inhibitor of PPP1C. The chain is Inactive phospholipase C-like protein 1 (Plcl1) from Rattus norvegicus (Rat).